Consider the following 598-residue polypeptide: Elongation factor 4 (598 aa).

Residues 2 to 184 (NRIRNFSIIA…TIVAKLPPPK (183 aa)) enclose the tr-type G domain. GTP contacts are provided by residues 14–19 (DHGKST) and 131–134 (NKID).

The protein belongs to the TRAFAC class translation factor GTPase superfamily. Classic translation factor GTPase family. LepA subfamily.

Its subcellular location is the cell inner membrane. It catalyses the reaction GTP + H2O = GDP + phosphate + H(+). Functionally, required for accurate and efficient protein synthesis under certain stress conditions. May act as a fidelity factor of the translation reaction, by catalyzing a one-codon backward translocation of tRNAs on improperly translocated ribosomes. Back-translocation proceeds from a post-translocation (POST) complex to a pre-translocation (PRE) complex, thus giving elongation factor G a second chance to translocate the tRNAs correctly. Binds to ribosomes in a GTP-dependent manner. This chain is Elongation factor 4, found in Desulfosudis oleivorans (strain DSM 6200 / JCM 39069 / Hxd3) (Desulfococcus oleovorans).